The chain runs to 334 residues: MRIGVIGLGRIGTIHAENLKMIDDAILYAISDVREDRLREMKEKLGVEKAYKDPHELIEDPNVDAVLVCSSTNTHSELVIACAKAKKHVFCEKPLSLNLADVDRMIEETKKADVILFTGFNRRFDRNFKKLKEAVENGTIGKPHVLRITSRDPAPPPLDYIRVSGGIFLDMTIHDFDMARYIMGEEVEEVFADGSVLVDEEIGKAGDVDTAVVVLRFKSGALGVIDNSRRAVYGYDQRIEVFGSKGRIFADNVRETTVVLTDEQGDRGSRYLYFFLERYRDSYLEELKTFIKNVKSGEPPAVSGEDGKMALLLGYAAKKSLEEKRSVKLEEVIG.

It belongs to the Gfo/Idh/MocA family.

It carries out the reaction myo-inositol + NAD(+) = scyllo-inosose + NADH + H(+). It functions in the pathway polyol metabolism; myo-inositol metabolism. Its function is as follows. Catalyzes the NAD(+)-dependent oxidation of myo-inositol (MI) to 2-keto-myo-inositol (scyllo-inosose), and thus probably functions in a myo-inositol degradation pathway together with IolM, IolN and IolO. Has no activity with scyllo-inositol and much reduced activity (78-fold lower catalytic efficiency) with 1D-chiro-inositol. This is Myo-inositol 2-dehydrogenase from Thermotoga maritima (strain ATCC 43589 / DSM 3109 / JCM 10099 / NBRC 100826 / MSB8).